A 189-amino-acid polypeptide reads, in one-letter code: Potassium-transporting ATPase KdpC subunit (189 aa).

Residues 6–26 form a helical membrane-spanning segment; that stretch reads PAIMMVLVFTIICGGIYPAVV.

Belongs to the KdpC family. In terms of assembly, the system is composed of three essential subunits: KdpA, KdpB and KdpC.

It is found in the cell inner membrane. Its function is as follows. Part of the high-affinity ATP-driven potassium transport (or Kdp) system, which catalyzes the hydrolysis of ATP coupled with the electrogenic transport of potassium into the cytoplasm. This subunit acts as a catalytic chaperone that increases the ATP-binding affinity of the ATP-hydrolyzing subunit KdpB by the formation of a transient KdpB/KdpC/ATP ternary complex. The chain is Potassium-transporting ATPase KdpC subunit from Geobacter metallireducens (strain ATCC 53774 / DSM 7210 / GS-15).